A 595-amino-acid polypeptide reads, in one-letter code: Actin-histidine N-methyltransferase (595 aa).

Residues 1 to 22 (MGKKSRVKTQKSGTGATATVSP) are disordered. Polar residues predominate over residues 10 to 20 (QKSGTGATATV). Residues arginine 75, 104–106 (EGF), arginine 254, 275–279 (DMCNH), and 325–327 (SGF) contribute to the S-adenosyl-L-methionine site. The region spanning 94–314 (EGFEMVNFKE…AGEQIYIFYG (221 aa)) is the SET domain. Position 513 is a phosphoserine (serine 513). The interval 552–595 (LVNGENCIPNGTRSENEDLNQEENKRAVEDAKGSSSDSTDAVKK) is disordered. The span at 573 to 583 (EENKRAVEDAK) shows a compositional bias: basic and acidic residues. The segment covering 584–595 (GSSSDSTDAVKK) has biased composition (polar residues).

Belongs to the class V-like SAM-binding methyltransferase superfamily. SETD3 actin-histidine methyltransferase family. As to quaternary structure, interacts with MYOD1. In terms of processing, phosphorylated by GSK3B, which is required for recognition by the SCF(FBXW7) complex and subsequent degradation. Ubiquitinated by the SCF(FBXW7) complex following phosphorylation by GSK3B, leading to its degradation by the proteasome.

It is found in the cytoplasm. The protein localises to the nucleus. The catalysed reaction is L-histidyl-[protein] + S-adenosyl-L-methionine = N(tele)-methyl-L-histidyl-[protein] + S-adenosyl-L-homocysteine + H(+). Protein-histidine N-methyltransferase that specifically mediates 3-methylhistidine (tele-methylhistidine) methylation of actin at 'His-73'. Histidine methylation of actin is required for smooth muscle contraction of the laboring uterus during delivery. Does not have protein-lysine N-methyltransferase activity and probably only catalyzes histidine methylation of actin. This is Actin-histidine N-methyltransferase from Otolemur garnettii (Small-eared galago).